Consider the following 72-residue polypeptide: Small ribosomal subunit protein bS20 (72 aa).

It belongs to the bacterial ribosomal protein bS20 family.

In terms of biological role, binds directly to 16S ribosomal RNA. This chain is Small ribosomal subunit protein bS20 (rpsT), found in Proteus mirabilis.